The following is a 574-amino-acid chain: Arginine--tRNA ligase (574 aa).

Positions 126–136 (PNIAKRMHVGH) match the 'HIGH' region motif.

This sequence belongs to the class-I aminoacyl-tRNA synthetase family. In terms of assembly, monomer.

It localises to the cytoplasm. It catalyses the reaction tRNA(Arg) + L-arginine + ATP = L-arginyl-tRNA(Arg) + AMP + diphosphate. The sequence is that of Arginine--tRNA ligase from Chloroflexus aurantiacus (strain ATCC 29366 / DSM 635 / J-10-fl).